Reading from the N-terminus, the 383-residue chain is Probable purine permease 16 (383 aa).

10 consecutive transmembrane segments (helical) span residues 30–50, 72–92, 113–133, 138–158, 166–186, 203–223, 247–267, 297–317, 322–342, and 346–363; these read ISVFICGFLIFAGDSLVMLLL, WTQALIQNAAFPILIPFFFIL, VLSLYVSLGVLVSVYSKLYAL, VGWGILLSTQLILTSLFSAFI, WIIISIIFTLGADFFGGPAFA, LILIFPTLAFSLSLCLMQLGF, ICVSFIATLICTVGLFASGEF, VWAVGLLGLVLLVSGLFADVV, SPVVALLVVLAFDFMDDEFGW, and GALLGAVLALASYFYSLH.

This sequence belongs to the purine permeases (TC 2.A.7.14) family.

Its subcellular location is the membrane. The sequence is that of Probable purine permease 16 (PUP16) from Arabidopsis thaliana (Mouse-ear cress).